The following is a 145-amino-acid chain: MIALIQRVTRASVTVEGEVTGEIGAGLLVLLGVEKDDDEQKANRLCERVLGYRIFSDAEGKMNLNVQQAGGSVLVVSQFTLAADTERGMRPSFSKGASPDRAEALYDYFVERCRQQEMNTQTGRFAADMQVSLVNDAPVTFWLQV.

The protein belongs to the DTD family. As to quaternary structure, homodimer.

Its subcellular location is the cytoplasm. It catalyses the reaction glycyl-tRNA(Ala) + H2O = tRNA(Ala) + glycine + H(+). The catalysed reaction is a D-aminoacyl-tRNA + H2O = a tRNA + a D-alpha-amino acid + H(+). Functionally, an aminoacyl-tRNA editing enzyme that deacylates mischarged D-aminoacyl-tRNAs. Also deacylates mischarged glycyl-tRNA(Ala), protecting cells against glycine mischarging by AlaRS. Acts via tRNA-based rather than protein-based catalysis; rejects L-amino acids rather than detecting D-amino acids in the active site. By recycling D-aminoacyl-tRNA to D-amino acids and free tRNA molecules, this enzyme counteracts the toxicity associated with the formation of D-aminoacyl-tRNA entities in vivo and helps enforce protein L-homochirality. The protein is Probable D-aminoacyl-tRNA deacylase of Shigella flexneri serotype 5b (strain 8401).